A 156-amino-acid polypeptide reads, in one-letter code: Small ribosomal subunit protein uS7 (156 aa).

The protein belongs to the universal ribosomal protein uS7 family. As to quaternary structure, part of the 30S ribosomal subunit. Contacts proteins S9 and S11.

Functionally, one of the primary rRNA binding proteins, it binds directly to 16S rRNA where it nucleates assembly of the head domain of the 30S subunit. Is located at the subunit interface close to the decoding center, probably blocks exit of the E-site tRNA. This chain is Small ribosomal subunit protein uS7, found in Parasynechococcus marenigrum (strain WH8102).